The following is a 154-amino-acid chain: Hexachlorocyclohexane dehydrochlorinase 1 (154 aa).

D25 is a catalytic residue. H73 serves as the catalytic Proton acceptor.

The protein belongs to the HCH dehydrochlorinase family. In terms of assembly, homotrimer.

The protein localises to the periplasm. The catalysed reaction is gamma-hexachlorocyclohexane = (3R,4S,5S,6R)-pentachlorocyclohexene + chloride + H(+). It catalyses the reaction (3R,4S,5S,6R)-pentachlorocyclohexene = (3R,6R)-1,3,4,6-tetrachlorocyclohexa-1,4-diene + chloride + H(+). It participates in xenobiotic degradation; hexachlorocyclohexane degradation. Its function is as follows. Catalyzes the conversion of the important environmental pollutant gamma-hexachlorocyclohexane (gamma-HCH or lindane) to 1,3,4,6-tetrachloro-1,4-cyclohexadiene (1,4-TCDN) via gamma-pentachlorocyclohexene (gamma-PCCH). Proceeds by two successive 1,2-anti conformationally dependent dehydrochlorinations. Also shows activity with alpha- and delta-HCH, giving alpha- and delta-PCCH respectively, but not with the beta isomer. The sequence is that of Hexachlorocyclohexane dehydrochlorinase 1 from Sphingobium indicum (strain DSM 16412 / CCM 7286 / MTCC 6364 / B90A).